An 896-amino-acid polypeptide reads, in one-letter code: Zinc finger protein 574 (896 aa).

3 consecutive C2H2-type zinc fingers follow at residues 16–38, 76–98, and 126–148; these read YVCSECNQLYGSLEEVLMHQNSH, YQCLECGQLLMSPSQLLEHQELH, and YECVDCKALFASQELWLNHRQTH. Serine 164 carries the post-translational modification Phosphoserine. The C2H2-type 4 zinc finger occupies 214 to 236; it reads YKCSECSQLFQLPADFLEHQATH. Residues 259–272 are compositionally biased toward low complexity; sequence VEVPVSQPEPVPSS. Residues 259 to 303 form a disordered region; the sequence is VEVPVSQPEPVPSSDHSYELRNGEALGRDRRGRRARRNNSGEPGG. Over residues 274–287 the composition is skewed to basic and acidic residues; the sequence is HSYELRNGEALGRD. The residue at position 298 (serine 298) is a Phosphoserine. 4 C2H2-type zinc fingers span residues 309-331, 336-358, 364-386, and 392-413; these read LFCSACDQLFLSPHQLQQHLRSH, FKCPLCSRVFPSPSSLDQHLGDH, FLCVDCGLAFGTEALLLAHRRAH, and HSCPCGKTFVNLTKFLYHRRTH. A disordered region spans residues 434 to 460; the sequence is FPEPAPAETGEPEAPEPPVAEESSAEP. 6 consecutive C2H2-type zinc fingers follow at residues 466 to 489, 495 to 517, 523 to 545, 551 to 573, 579 to 601, and 607 to 630; these read YRCLLCSREFGKALQLTRHQRFVH, HKCSICGKMFKKKSHVRNHLRTH, FPCPDCSKPFNSPANLARHRLTH, YRCGDCGKAFTQSSTLRQHRLVH, YRCQECGVRFHRPYRLLMHRYHH, and YKCRECPRSFLLRRLLEVHQLVAH. The C2H2-type 15; degenerate zinc-finger motif lies at 636-659; it reads HRCSSCGAAFPSSLRLREHRCAAA. The C2H2-type 16 zinc finger occupies 667-689; the sequence is FECGTCGKKVGSAARLQAHEAAH. Residues 687-733 form a disordered region; it reads AAHAAAGPGEVLAKEPPAPRAPRAARTPITSPTTLGSAAPAAPAAPA. Low complexity predominate over residues 707–732; it reads APRAARTPITSPTTLGSAAPAAPAAP. Serine 717 bears the Phosphoserine mark. 4 consecutive C2H2-type zinc fingers follow at residues 738-760, 766-788, 794-816, and 822-844; these read LECSECKKLFSTETSLQVHRRIH, YPCPDCGKAFRQSTHLKDHRRLH, FACEVCGKAFAISMRLAEHRRIH, and YSCPDCGKSYRSFSNLWKHRKTH. Asymmetric dimethylarginine is present on arginine 832.

This sequence belongs to the krueppel C2H2-type zinc-finger protein family.

It is found in the nucleus. May be involved in transcriptional regulation. The chain is Zinc finger protein 574 (ZNF574) from Bos taurus (Bovine).